We begin with the raw amino-acid sequence, 197 residues long: Dephospho-CoA kinase (197 aa).

Positions isoleucine 2–valine 197 constitute a DPCK domain. ATP is bound at residue alanine 10–threonine 15.

It belongs to the CoaE family.

It localises to the cytoplasm. It catalyses the reaction 3'-dephospho-CoA + ATP = ADP + CoA + H(+). It functions in the pathway cofactor biosynthesis; coenzyme A biosynthesis; CoA from (R)-pantothenate: step 5/5. In terms of biological role, catalyzes the phosphorylation of the 3'-hydroxyl group of dephosphocoenzyme A to form coenzyme A. The sequence is that of Dephospho-CoA kinase from Streptococcus thermophilus (strain ATCC BAA-250 / LMG 18311).